Here is a 134-residue protein sequence, read N- to C-terminus: ATP synthase epsilon chain (134 aa).

Belongs to the ATPase epsilon chain family. As to quaternary structure, F-type ATPases have 2 components, CF(1) - the catalytic core - and CF(0) - the membrane proton channel. CF(1) has five subunits: alpha(3), beta(3), gamma(1), delta(1), epsilon(1). CF(0) has three main subunits: a, b and c. In this bacterium the a and b subunits are transcribed but do not seem to be translated, thus the ATP synthase consists of the alpha, beta, gamma, delta, epsilon and c subunits.

It localises to the cell membrane. Functionally, produces ATP from ADP in the presence of a proton gradient across the membrane. The sequence is that of ATP synthase epsilon chain from Moorella thermoacetica (strain ATCC 39073 / JCM 9320).